The sequence spans 213 residues: 5-oxoprolinase subunit B (213 aa).

Belongs to the PxpB family. As to quaternary structure, forms a complex composed of PxpA, PxpB and PxpC.

The catalysed reaction is 5-oxo-L-proline + ATP + 2 H2O = L-glutamate + ADP + phosphate + H(+). Functionally, catalyzes the cleavage of 5-oxoproline to form L-glutamate coupled to the hydrolysis of ATP to ADP and inorganic phosphate. The sequence is that of 5-oxoprolinase subunit B from Haemophilus influenzae (strain ATCC 51907 / DSM 11121 / KW20 / Rd).